The primary structure comprises 544 residues: MAKDIKFSEEARRAMLRGVDALADAVKVTLGPKGRNVVLEKKFGSPLITNDGVTIAKEIELEDAFENMGAKLVAEVASKTNDVAGDGTTTATVLAQAMIREGLKNVTAGANPVGVRKGIEEAVKVALEGLHEISKPIEGKESIAQVASISAADEEVGSLIAEAMERVGNDGVITIEESKGFTTELEVVEGMQFDRGYASPYMVTDSDKMEAVLENPYILITDKKITNIQEILPVLEQVVQQGKPLLLIAEDVEGEALATLVVNKLRGTFNAVAVKAPGFGDRRKAMLEDISVLTGGELITEDLGLDLKSTEIGQLGRASKVVVTKENTTIVEGSGDSAQIAARVNQIRAQVEETTSEFDKEKLQERLAKLAGGVAVIKVGAATETELKERKLRIEDALNSTRAAVEEGIVSGGGTALVNVYKKVASIEADGDVQTGVNIVLRSLEEPIRQIAHNAGLEGSVIVERLKNEEIGVGFNAATNEWVNMIEKGIVDPTKVTRSALQNAASVAAMLLTTEAVVADKPEEGGSGGGMPDMGGMGGMGGMM.

ATP is bound by residues Thr-29–Pro-32, Asp-86–Thr-90, Gly-413, Asn-476–Ala-478, and Asp-492.

It belongs to the chaperonin (HSP60) family. As to quaternary structure, forms a cylinder of 14 subunits composed of two heptameric rings stacked back-to-back. Interacts with the co-chaperonin GroES.

The protein resides in the cytoplasm. It catalyses the reaction ATP + H2O + a folded polypeptide = ADP + phosphate + an unfolded polypeptide.. Functionally, together with its co-chaperonin GroES, plays an essential role in assisting protein folding. The GroEL-GroES system forms a nano-cage that allows encapsulation of the non-native substrate proteins and provides a physical environment optimized to promote and accelerate protein folding. The chain is Chaperonin GroEL from Bacillus pumilus (strain SAFR-032).